Consider the following 437-residue polypeptide: UDP-N-acetylmuramate--L-alanine ligase (437 aa).

108-114 (GAHGKTS) lines the ATP pocket.

The protein belongs to the MurCDEF family.

Its subcellular location is the cytoplasm. The catalysed reaction is UDP-N-acetyl-alpha-D-muramate + L-alanine + ATP = UDP-N-acetyl-alpha-D-muramoyl-L-alanine + ADP + phosphate + H(+). It functions in the pathway cell wall biogenesis; peptidoglycan biosynthesis. Cell wall formation. The polypeptide is UDP-N-acetylmuramate--L-alanine ligase (Staphylococcus carnosus (strain TM300)).